Consider the following 1500-residue polypeptide: Carbamoyl-phosphate synthase [ammonia], mitochondrial (1500 aa).

The transit peptide at 1–38 (MTRILTACKVVKTLKSGFGLANVTSKRQWDFSRPGIRL) directs the protein to the mitochondrion. The segment at 39 to 218 (LSVKAQTAHI…VKVFGKGNPT (180 aa)) is anthranilate phosphoribosyltransferase homolog. Lys-55, Lys-57, and Lys-119 each carry N6-acetyllysine; alternate. Lys-55 carries the N6-glutaryllysine; alternate modification. N6-succinyllysine; alternate occurs at positions 55, 57, and 119. Ser-148 bears the Phosphoserine mark. Residues Lys-157 and Lys-171 each carry the N6-acetyllysine; alternate modification. The residue at position 157 (Lys-157) is an N6-succinyllysine; alternate. Position 171 is an N6-glutaryllysine; alternate (Lys-171). N6-glutaryllysine is present on Lys-176. An N6-acetyllysine modification is found at Lys-182. Ser-189 is subject to Phosphoserine. At Lys-197 the chain carries N6-acetyllysine. N6-acetyllysine; alternate is present on residues Lys-207, Lys-210, Lys-214, Lys-219, and Lys-228. An N6-glutaryllysine; alternate mark is found at Lys-207, Lys-210, Lys-214, Lys-219, and Lys-228. Residue Lys-207 is modified to N6-succinyllysine; alternate. Lys-214 is subject to N6-succinyllysine; alternate. The Glutamine amidotransferase type-1 domain maps to 219-404 (KVVAVDCGIK…FSLIKKGKGT (186 aa)). Lys-237 bears the N6-glutaryllysine mark. Lys-279 carries the N6-acetyllysine modification. Residues Lys-280, Lys-287, Lys-307, and Lys-310 each carry the N6-acetyllysine; alternate modification. Lys-280 carries the N6-glutaryllysine; alternate modification. N6-succinyllysine; alternate occurs at positions 287 and 307. Lys-307 and Lys-310 each carry N6-glutaryllysine; alternate. At Lys-400 the chain carries N6-succinyllysine. N6-glutaryllysine; alternate occurs at positions 402, 412, 453, and 458. N6-succinyllysine; alternate is present on residues Lys-402 and Lys-412. Residues Lys-412, Lys-453, Lys-458, Lys-522, Lys-527, and Lys-532 each carry the N6-acetyllysine; alternate modification. An N6-succinyllysine; alternate mark is found at Lys-458, Lys-522, and Lys-527. N6-glutaryllysine; alternate occurs at positions 527 and 532. Position 537 is a phosphoserine; alternate (Ser-537). Ser-537 carries O-linked (GlcNAc) serine; alternate glycosylation. Position 540 is a phosphoserine (Ser-540). The ATP-grasp 1 domain occupies 551–743 (SDKLNEINEK…LAFIAAKIAL (193 aa)). N6-acetyllysine; alternate occurs at positions 553 and 560. Lys-553 bears the N6-glutaryllysine; alternate mark. Lys-553 and Lys-560 each carry N6-succinyllysine; alternate. Ser-569 carries the phosphoserine modification. 3 positions are modified to N6-acetyllysine; alternate: Lys-575, Lys-603, and Lys-612. Lys-575, Lys-603, and Lys-612 each carry N6-succinyllysine; alternate. An N6-acetyllysine modification is found at Lys-630. Lys-728 carries the post-translational modification N6-glutaryllysine. 8 positions are modified to N6-acetyllysine; alternate: Lys-751, Lys-757, Lys-772, Lys-793, Lys-811, Lys-831, Lys-841, and Lys-856. Lys-751 and Lys-757 each carry N6-succinyllysine; alternate. Residues Lys-757, Lys-772, Lys-793, and Lys-811 each carry the N6-glutaryllysine; alternate modification. Residue Lys-793 is modified to N6-succinyllysine; alternate. Position 831 is an N6-succinyllysine; alternate (Lys-831). N6-glutaryllysine; alternate occurs at positions 841 and 856. Lys-869 carries the post-translational modification N6-glutaryllysine. N6-acetyllysine; alternate is present on residues Lys-875, Lys-889, and Lys-892. Residues Lys-875, Lys-889, and Lys-892 each carry the N6-glutaryllysine; alternate modification. N6-succinyllysine; alternate occurs at positions 875, 889, and 892. Residues Ser-896 and Ser-898 each carry the phosphoserine modification. N6-acetyllysine; alternate is present on residues Lys-908, Lys-915, and Lys-919. Lys-908, Lys-915, and Lys-919 each carry N6-glutaryllysine; alternate. N6-succinyllysine; alternate is present on residues Lys-915 and Lys-919. Lys-935 bears the N6-acetyllysine mark. Ser-1036 is modified (phosphoserine). At Lys-1074 the chain carries N6-acetyllysine; alternate. Lys-1074 bears the N6-glutaryllysine; alternate mark. Lys-1074 bears the N6-succinyllysine; alternate mark. Residues Ser-1079, Ser-1090, and Ser-1093 each carry the phosphoserine modification. The ATP-grasp 2 domain occupies 1093–1284 (SAVLDELKVA…FIDVATKVMI (192 aa)). At Lys-1100 the chain carries N6-acetyllysine; alternate. Lys-1100 is subject to N6-succinyllysine; alternate. Lys-1149 is subject to N6-succinyllysine. N6-acetyllysine; alternate occurs at positions 1168 and 1183. Lys-1168 and Lys-1183 each carry N6-glutaryllysine; alternate. Residues Lys-1168 and Lys-1183 each carry the N6-succinyllysine; alternate modification. At Ser-1203 the chain carries Phosphoserine. Lys-1222 carries the N6-acetyllysine modification. Lys-1224 is modified (N6-glutaryllysine). An N6-acetyllysine; alternate mark is found at Lys-1232, Lys-1269, and Lys-1291. Residues Lys-1232, Lys-1269, and Lys-1291 each carry the N6-succinyllysine; alternate modification. The O-linked (GlcNAc) serine glycan is linked to Ser-1331. A glycan (O-linked (GlcNAc) threonine) is linked at Thr-1332. One can recognise an MGS-like domain in the interval 1355-1500 (FKIPQKGILI…YRQYSAGKAA (146 aa)). The residue at position 1356 (Lys-1356) is an N6-acetyllysine; alternate. An N6-glutaryllysine; alternate mark is found at Lys-1356 and Lys-1360. Residues Lys-1356 and Lys-1360 each carry the N6-succinyllysine; alternate modification. Thr-1391, Thr-1394, and Trp-1410 together coordinate N-acetyl-L-glutamate. 2 positions are modified to phosphoserine: Ser-1419 and Ser-1431. N-acetyl-L-glutamate contacts are provided by Asn-1437 and Asn-1440. Residue Lys-1444 is modified to N6-acetyllysine; alternate. Lys-1444 bears the N6-succinyllysine; alternate mark. N-acetyl-L-glutamate is bound at residue Asn-1449. 3 positions are modified to N6-acetyllysine; alternate: Lys-1471, Lys-1479, and Lys-1486. Residues Lys-1471, Lys-1479, and Lys-1486 each carry the N6-succinyllysine; alternate modification. 2 positions are modified to N6-glutaryllysine; alternate: Lys-1479 and Lys-1486.

In terms of assembly, can form homooligomers (monomers as predominant form and dimers). Post-translationally, 50% of the mature protein that was isolated had Leu-39 as its N-terminal residue and 50% had Ser-40 suggesting two adjacent processing sites. However, the possibility of proteolytic removal of Leu-39 during the isolation of the enzyme cannot be excluded. Undergoes proteolytic cleavage in the C-terminal region corresponding to the loss of approximately 12 AA residues from the C-terminus. In terms of processing, succinylated at Lys-287 and Lys-1291. Desuccinylated at Lys-1291 by SIRT5, leading to activation. Glutarylated. Glutarylation levels increase during fasting. Deglutarylated by SIRT5 at Lys-55, Lys-219, Lys-412, Lys-889, Lys-892, Lys-915, Lys-1360 and Lys-1486, leading to activation. As to expression, primarily in the liver and small intestine.

Its subcellular location is the mitochondrion. The protein localises to the nucleus. It is found in the nucleolus. The protein resides in the cell membrane. The enzyme catalyses hydrogencarbonate + NH4(+) + 2 ATP = carbamoyl phosphate + 2 ADP + phosphate + 2 H(+). With respect to regulation, requires N-acetyl-L-glutamate (NAG) as an allosteric activator. N-acetyl-L-beta-phenylglutamate (Phe-NAG) can also activate CPSase I, but with an activation constant that is 2-fold higher than that for NAG. Involved in the urea cycle of ureotelic animals where the enzyme plays an important role in removing excess ammonia from the cell. The protein is Carbamoyl-phosphate synthase [ammonia], mitochondrial (Cps1) of Rattus norvegicus (Rat).